Here is a 462-residue protein sequence, read N- to C-terminus: Cysteine--tRNA ligase (462 aa).

Position 28 (Cys28) interacts with Zn(2+). The 'HIGH' region motif lies at 30–40; the sequence is ITVYDLCHIGH. Cys210, His235, and Glu239 together coordinate Zn(2+). Positions 267 to 271 match the 'KMSKS' region motif; it reads KMSKS. Lys270 contacts ATP.

It belongs to the class-I aminoacyl-tRNA synthetase family. In terms of assembly, monomer. It depends on Zn(2+) as a cofactor.

It localises to the cytoplasm. The enzyme catalyses tRNA(Cys) + L-cysteine + ATP = L-cysteinyl-tRNA(Cys) + AMP + diphosphate. This is Cysteine--tRNA ligase from Erwinia tasmaniensis (strain DSM 17950 / CFBP 7177 / CIP 109463 / NCPPB 4357 / Et1/99).